The following is a 944-amino-acid chain: 2-oxoglutarate dehydrogenase E1 component (944 aa).

The disordered stretch occupies residues 915 to 944 (RRRSSPAEGDPTVHKKEQERIVSDSLTRKN). The span at 925–936 (PTVHKKEQERIV) shows a compositional bias: basic and acidic residues.

Belongs to the alpha-ketoglutarate dehydrogenase family. In terms of assembly, homodimer. Part of the 2-oxoglutarate dehydrogenase (OGDH) complex composed of E1 (2-oxoglutarate dehydrogenase), E2 (dihydrolipoamide succinyltransferase) and E3 (dihydrolipoamide dehydrogenase); the complex contains multiple copies of the three enzymatic components (E1, E2 and E3). Thiamine diphosphate serves as cofactor.

The enzyme catalyses N(6)-[(R)-lipoyl]-L-lysyl-[protein] + 2-oxoglutarate + H(+) = N(6)-[(R)-S(8)-succinyldihydrolipoyl]-L-lysyl-[protein] + CO2. Its function is as follows. E1 component of the 2-oxoglutarate dehydrogenase (OGDH) complex which catalyzes the decarboxylation of 2-oxoglutarate, the first step in the conversion of 2-oxoglutarate to succinyl-CoA and CO(2). This Bacillus velezensis (strain DSM 23117 / BGSC 10A6 / LMG 26770 / FZB42) (Bacillus amyloliquefaciens subsp. plantarum) protein is 2-oxoglutarate dehydrogenase E1 component.